Here is a 121-residue protein sequence, read N- to C-terminus: Small ribosomal subunit protein uS13 (121 aa).

A disordered region spans residues 94–121; sequence GLPLRGQRTRTNARTRKGPRRAAQALKK.

Belongs to the universal ribosomal protein uS13 family. In terms of assembly, part of the 30S ribosomal subunit. Forms a loose heterodimer with protein S19. Forms two bridges to the 50S subunit in the 70S ribosome.

Located at the top of the head of the 30S subunit, it contacts several helices of the 16S rRNA. In the 70S ribosome it contacts the 23S rRNA (bridge B1a) and protein L5 of the 50S subunit (bridge B1b), connecting the 2 subunits; these bridges are implicated in subunit movement. Contacts the tRNAs in the A and P-sites. The protein is Small ribosomal subunit protein uS13 of Burkholderia mallei (strain NCTC 10247).